An 852-amino-acid polypeptide reads, in one-letter code: Bifunctional heparan sulfate N-deacetylase/N-sulfotransferase 1 (852 aa).

Residues 1-13 (MIITPYLNRKITR) lie on the Cytoplasmic side of the membrane. A helical; Signal-anchor for type II membrane protein membrane pass occupies residues 14-34 (PLKWILALIFLYLIYICLFSN). Positions 34-574 (NNSKPPKPRK…PRHHAILPPS (541 aa)) are heparan sulfate N-deacetylase 1. Over 35–852 (NSKPPKPRKK…WLEESVRIRA (818 aa)) the chain is Lumenal. N-linked (GlcNAc...) asparagine glycans are attached at residues N50, N72, N261, N328, N377, N428, and N576. A heparan sulfate N-sulfotransferase 1 region spans residues 575–852 (INCTKKSLPD…WLEESVRIRA (278 aa)). Residue K592 is the For sulfotransferase activity of the active site. 592 to 596 (KTGST) is a 3'-phosphoadenylyl sulfate binding site. An N-linked (GlcNAc...) asparagine glycan is attached at N607. S686 provides a ligand contact to 3'-phosphoadenylyl sulfate. A glycan (N-linked (GlcNAc...) asparagine) is linked at N712. C789 and C798 are joined by a disulfide. A 3'-phosphoadenylyl sulfate-binding site is contributed by 803–807 (KGRKY).

This sequence belongs to the sulfotransferase 1 family. NDST subfamily. Monomer. In terms of tissue distribution, present in some specific neurons in head and tail regions and muscles.

It is found in the golgi apparatus membrane. The enzyme catalyses alpha-D-glucosaminyl-[heparan sulfate](n) + 3'-phosphoadenylyl sulfate = N-sulfo-alpha-D-glucosaminyl-[heparan sulfate](n) + adenosine 3',5'-bisphosphate + 2 H(+). The protein operates within glycan metabolism; heparan sulfate biosynthesis. It participates in glycan metabolism; heparin biosynthesis. Essential bifunctional enzyme that catalyzes both the N-deacetylation and the N-sulfation of glucosamine (GlcNAc) of the glycosaminoglycan in heparan sulfate. Modifies the GlcNAc-GlcA disaccharide repeating sugar backbone to make N-sulfated heparosan, a prerequisite substrate for later modifications in heparin biosynthesis. The sequence is that of Bifunctional heparan sulfate N-deacetylase/N-sulfotransferase 1 (hst-1) from Caenorhabditis elegans.